A 339-amino-acid chain; its full sequence is DNA-directed RNA polymerase RPB7 homolog (339 aa).

Belongs to the asfivirus D339L family. In terms of assembly, part of the viral DNA-directed RNA polymerase that consists of 8 polII-like subunits (RPB1, RPB2, RPB3, RPB5, RPB6, RPB7, RPB9, RPB10), a capping enzyme and a termination factor.

It is found in the host cytoplasm. The protein resides in the virion. Its function is as follows. Component of the DNA-directed RNA polymerase (RNAP) that catalyzes the transcription in the cytoplasm of viral DNA into RNA using the four ribonucleoside triphosphates as substrates. This chain is DNA-directed RNA polymerase RPB7 homolog, found in Ornithodoros (relapsing fever ticks).